The primary structure comprises 233 residues: LexA repressor (233 aa).

Positions 26–46 (FDEMKEALDLRSKSGIHRLIT) form a DNA-binding region, H-T-H motif. Catalysis depends on for autocatalytic cleavage activity residues Ser154 and Lys192.

Belongs to the peptidase S24 family. In terms of assembly, homodimer.

It carries out the reaction Hydrolysis of Ala-|-Gly bond in repressor LexA.. Represses a number of genes involved in the response to DNA damage (SOS response), including recA and lexA. In the presence of single-stranded DNA, RecA interacts with LexA causing an autocatalytic cleavage which disrupts the DNA-binding part of LexA, leading to derepression of the SOS regulon and eventually DNA repair. This chain is LexA repressor, found in Roseobacter denitrificans (strain ATCC 33942 / OCh 114) (Erythrobacter sp. (strain OCh 114)).